Here is a 413-residue protein sequence, read N- to C-terminus: Serine hydroxymethyltransferase (413 aa).

(6S)-5,6,7,8-tetrahydrofolate is bound by residues Leu-117 and 121 to 123 (GHL). Lys-226 carries the N6-(pyridoxal phosphate)lysine modification. 349-351 (SPF) serves as a coordination point for (6S)-5,6,7,8-tetrahydrofolate.

Belongs to the SHMT family. Homodimer. Pyridoxal 5'-phosphate is required as a cofactor.

It localises to the cytoplasm. The catalysed reaction is (6R)-5,10-methylene-5,6,7,8-tetrahydrofolate + glycine + H2O = (6S)-5,6,7,8-tetrahydrofolate + L-serine. It functions in the pathway one-carbon metabolism; tetrahydrofolate interconversion. The protein operates within amino-acid biosynthesis; glycine biosynthesis; glycine from L-serine: step 1/1. In terms of biological role, catalyzes the reversible interconversion of serine and glycine with tetrahydrofolate (THF) serving as the one-carbon carrier. This reaction serves as the major source of one-carbon groups required for the biosynthesis of purines, thymidylate, methionine, and other important biomolecules. Also exhibits THF-independent aldolase activity toward beta-hydroxyamino acids, producing glycine and aldehydes, via a retro-aldol mechanism. This Listeria welshimeri serovar 6b (strain ATCC 35897 / DSM 20650 / CCUG 15529 / CIP 8149 / NCTC 11857 / SLCC 5334 / V8) protein is Serine hydroxymethyltransferase.